We begin with the raw amino-acid sequence, 229 residues long: Putative N-acetylmannosamine-6-phosphate 2-epimerase (229 aa).

Belongs to the NanE family.

It carries out the reaction an N-acyl-D-glucosamine 6-phosphate = an N-acyl-D-mannosamine 6-phosphate. It participates in amino-sugar metabolism; N-acetylneuraminate degradation; D-fructose 6-phosphate from N-acetylneuraminate: step 3/5. In terms of biological role, converts N-acetylmannosamine-6-phosphate (ManNAc-6-P) to N-acetylglucosamine-6-phosphate (GlcNAc-6-P). The sequence is that of Putative N-acetylmannosamine-6-phosphate 2-epimerase from Escherichia coli O8 (strain IAI1).